Here is a 423-residue protein sequence, read N- to C-terminus: MSEPQRLKPVFPQDPKWPGEGSSRVPFWAYTREDLYKRELERLFYANHWCYVGLEAEIPNPGDFKRTVIGERSVIMVRDPDGGINVVENVCAHRGMRFCRERHGNAKDFFCPYHQWNYSLKGDLQGVPFRRGVKQDGKVNGGMPKDFKLEEHGLTKLKVAARGGAVFASFDHDVEPFEEFLGPTILHYFDRVFNGRKLKILGYRRQRIPGNWKLMQENIKDPYHPGLLHTWFSTFGLWRADNKSELKMDAKFRHAAMISTRGQGGKNEEVVSGVDSFKEQMKVNDPRLLDIVPEPWWGGPTAVMTTIFPSVIIQQQVNSVSTRHIQPNGHGSFDFVWTHFGFEDDNEEWTQRRLIQANLFGPAGFVSADDGEVIEWSQEGFEQKPTHRTVIEMGGHEIGDTDHMVTETLIRGMYDYWRKVMGE.

Residues 1 to 20 (MSEPQRLKPVFPQDPKWPGE) are disordered. One can recognise a Rieske domain in the interval 49–168 (WCYVGLEAEI…VAARGGAVFA (120 aa)). Cysteine 91, histidine 93, cysteine 111, and histidine 114 together coordinate [2Fe-2S] cluster. Residues histidine 224, histidine 229, and aspartate 370 each contribute to the Fe cation site.

This sequence belongs to the bacterial ring-hydroxylating dioxygenase alpha subunit family. In terms of assembly, the salicylate 5-hydroxylase (S5H) multicomponent enzyme system is composed of an electron transfer component and an oxygenase component. The electron transfer component is comprised of a ferredoxin reductase (NagAa) and a ferredoxin (NagAb), and the oxygenase component is formed by a large subunit (NagG) and a small subunit (NagH). The cofactor is Fe cation. [2Fe-2S] cluster serves as cofactor.

The catalysed reaction is salicylate + NADH + O2 + H(+) = 2,5-dihydroxybenzoate + NAD(+) + H2O. Its pathway is aromatic compound metabolism; naphthalene degradation. Oxygenase component of the salicylate 5-hydroxylase (S5H) multicomponent enzyme system which catalyzes the 5-hydroxylation of salicylate to gentisate. Active only on substrates with a ring-substituted carboxylate group with an adjacent hydroxyl group. Primarily active against salicylate and substituted salicylates, but not against 2-hydroxycinnamate, 3-hydroxycinnamate, 2-hydroxyphenylacetate, 3-hydroxyphenylacetate, 2-hydroxybenzophenone, 1-hydroxy-2-naphthoate, 4-methoxysalicylate or 2-hydroxyacetophenone. The chain is Salicylate 5-hydroxylase, large oxygenase component from Ralstonia sp.